We begin with the raw amino-acid sequence, 417 residues long: NADH-quinone oxidoreductase subunit D (417 aa).

This sequence belongs to the complex I 49 kDa subunit family. As to quaternary structure, NDH-1 is composed of 14 different subunits. Subunits NuoB, C, D, E, F, and G constitute the peripheral sector of the complex.

It is found in the cell inner membrane. It carries out the reaction a quinone + NADH + 5 H(+)(in) = a quinol + NAD(+) + 4 H(+)(out). In terms of biological role, NDH-1 shuttles electrons from NADH, via FMN and iron-sulfur (Fe-S) centers, to quinones in the respiratory chain. The immediate electron acceptor for the enzyme in this species is believed to be ubiquinone. Couples the redox reaction to proton translocation (for every two electrons transferred, four hydrogen ions are translocated across the cytoplasmic membrane), and thus conserves the redox energy in a proton gradient. The polypeptide is NADH-quinone oxidoreductase subunit D (Legionella pneumophila (strain Corby)).